The sequence spans 144 residues: Large ribosomal subunit protein uL13 (144 aa).

The protein belongs to the universal ribosomal protein uL13 family. In terms of assembly, part of the 50S ribosomal subunit.

This protein is one of the early assembly proteins of the 50S ribosomal subunit, although it is not seen to bind rRNA by itself. It is important during the early stages of 50S assembly. This chain is Large ribosomal subunit protein uL13, found in Moorella thermoacetica (strain ATCC 39073 / JCM 9320).